Consider the following 334-residue polypeptide: Methionyl-tRNA formyltransferase (334 aa).

Serine 111–proline 114 lines the (6S)-5,6,7,8-tetrahydrofolate pocket.

It belongs to the Fmt family.

The catalysed reaction is L-methionyl-tRNA(fMet) + (6R)-10-formyltetrahydrofolate = N-formyl-L-methionyl-tRNA(fMet) + (6S)-5,6,7,8-tetrahydrofolate + H(+). Its function is as follows. Attaches a formyl group to the free amino group of methionyl-tRNA(fMet). The formyl group appears to play a dual role in the initiator identity of N-formylmethionyl-tRNA by promoting its recognition by IF2 and preventing the misappropriation of this tRNA by the elongation apparatus. The chain is Methionyl-tRNA formyltransferase from Trichormus variabilis (strain ATCC 29413 / PCC 7937) (Anabaena variabilis).